The chain runs to 241 residues: Probable FKBP-type peptidyl-prolyl cis-trans isomerase (241 aa).

Residues 150–241 enclose the PPIase FKBP-type domain; that stretch reads TDTVKVHYTG…VLDVNPKSEK (92 aa).

It belongs to the FKBP-type PPIase family.

It carries out the reaction [protein]-peptidylproline (omega=180) = [protein]-peptidylproline (omega=0). Functionally, PPIases accelerate the folding of proteins. It catalyzes the cis-trans isomerization of proline imidic peptide bonds in oligopeptides. This is Probable FKBP-type peptidyl-prolyl cis-trans isomerase from Haemophilus influenzae (strain ATCC 51907 / DSM 11121 / KW20 / Rd).